An 81-amino-acid chain; its full sequence is Conotoxin ArMKLT2-01 (81 aa).

Positions 1 to 19 (MKLTCVIIVVALFLTACHA) are cleaved as a signal peptide. A propeptide spanning residues 20–43 (KDKQEHPAVRGSDDMQDSEDLKLA) is cleaved from the precursor. Disulfide bonds link cysteine 46–cysteine 61, cysteine 53–cysteine 65, and cysteine 60–cysteine 74.

The protein belongs to the conotoxin O1 superfamily. As to expression, expressed by the venom duct.

The protein resides in the secreted. This Conus arenatus (Sand-dusted cone) protein is Conotoxin ArMKLT2-01.